A 214-amino-acid chain; its full sequence is Rhodanese-like domain-containing protein 10 (214 aa).

Residues Ala58–Glu182 enclose the Rhodanese domain. The Cysteine persulfide intermediate role is filled by Cys142. Residues Ala190–Leu206 form a helical membrane-spanning segment.

The protein localises to the membrane. The sequence is that of Rhodanese-like domain-containing protein 10 (STR10) from Arabidopsis thaliana (Mouse-ear cress).